The primary structure comprises 180 residues: Ribosome maturation factor RimM (180 aa).

The PRC barrel domain maps to 104 to 177 (EGEFHLLDLV…WLLLTPPPGL (74 aa)).

The protein belongs to the RimM family. Binds ribosomal protein uS19.

The protein localises to the cytoplasm. An accessory protein needed during the final step in the assembly of 30S ribosomal subunit, possibly for assembly of the head region. Essential for efficient processing of 16S rRNA. May be needed both before and after RbfA during the maturation of 16S rRNA. It has affinity for free ribosomal 30S subunits but not for 70S ribosomes. This chain is Ribosome maturation factor RimM, found in Synechococcus sp. (strain CC9902).